Reading from the N-terminus, the 581-residue chain is MSLLVVGLSHRSAPVSVLERASLNADAQLKLLQDTVAAEPAAEAAVLATCNRIELYADVDKFHAGVAELSTLLAQHSGVGLEELTPYLYVHYEDRAVHHLFSVACGLDSMVVGEGQILGQIKDSLARAQDLHTAGRLLNDLFQQALRVGKRAHSETGIDRAGQSLVTFGLEQLSAGADVEQWARGKKALVIGAGSMSSLAAATLARAGVAEIVVANRTFERAERLALLLEEQYGQRLSEGDDTDVLARAVPMDAVPGELTRADVAVSCTGATGLVLTADSVAATVEGRTGAPAVEDTAVQETAVREAGETPLPGAGSAADENCPLDLSSVSSVPSGFSVMGEAAVAGMDAATLEQHGAWAAGGTAVDRTREAGRSGPEADAELIGALAATATRVGRIPERRRPEPVAEAPRPQPVLFLLDLAMPRDVDAAVHRLAGVRLVDIESLADASADAPMAADVDMVRRIVADEVAAFGAAQRAAHITPTVVALRSMAADVVAGEIARLEGRLPGLDDKHRAEITQTVKRVVDKLLHAPTVRVKQLAAEPGGAGYADALRTLFDLDQETVASVSRAENSTEKNRGPA.

Residues 49–52 (TCNR), Ser-109, 114–116 (EGQ), and Gln-120 each bind substrate. The active-site Nucleophile is Cys-50. Position 192–197 (192–197 (GAGSMS)) interacts with NADP(+). Residues 292 to 416 (PAVEDTAVQE…AEAPRPQPVL (125 aa)) are insert.

The protein belongs to the glutamyl-tRNA reductase family. Homodimer.

The enzyme catalyses (S)-4-amino-5-oxopentanoate + tRNA(Glu) + NADP(+) = L-glutamyl-tRNA(Glu) + NADPH + H(+). The protein operates within porphyrin-containing compound metabolism; protoporphyrin-IX biosynthesis; 5-aminolevulinate from L-glutamyl-tRNA(Glu): step 1/2. In terms of biological role, catalyzes the NADPH-dependent reduction of glutamyl-tRNA(Glu) to glutamate 1-semialdehyde (GSA). The chain is Glutamyl-tRNA reductase from Streptomyces coelicolor (strain ATCC BAA-471 / A3(2) / M145).